A 213-amino-acid chain; its full sequence is Urease accessory protein UreE (213 aa).

The segment at 170-213 (EHHGHSHSHSHSHSHDHDHDHDHDHDHDHQHGPSCSHGHHHGHR) is disordered. The span at 182 to 200 (HSHDHDHDHDHDHDHDHQH) shows a compositional bias: basic and acidic residues.

The protein belongs to the UreE family.

Its subcellular location is the cytoplasm. In terms of biological role, involved in urease metallocenter assembly. Binds nickel. Probably functions as a nickel donor during metallocenter assembly. In Burkholderia mallei (strain NCTC 10229), this protein is Urease accessory protein UreE.